A 228-amino-acid chain; its full sequence is Probable septum site-determining protein MinC (228 aa).

It belongs to the MinC family. As to quaternary structure, interacts with MinD and FtsZ.

Cell division inhibitor that blocks the formation of polar Z ring septums. Rapidly oscillates between the poles of the cell to destabilize FtsZ filaments that have formed before they mature into polar Z rings. Prevents FtsZ polymerization. The sequence is that of Probable septum site-determining protein MinC from Oceanobacillus iheyensis (strain DSM 14371 / CIP 107618 / JCM 11309 / KCTC 3954 / HTE831).